A 661-amino-acid chain; its full sequence is Transketolase (661 aa).

An N-acetylserine modification is found at Ser-2. His-31 serves as a coordination point for substrate. Residues His-71 and 119–121 (GPL) each bind thiamine diphosphate. Mg(2+) is bound at residue Asp-160. Residues Gly-161 and Asn-190 each contribute to the thiamine diphosphate site. Mg(2+) is bound by residues Asn-190 and Val-192. Residues His-267, Arg-359, and Ser-386 each contribute to the substrate site. His-267 contacts thiamine diphosphate. The active-site Proton donor is the Glu-413. Residue Phe-439 participates in thiamine diphosphate binding. 3 residues coordinate substrate: His-463, Asp-471, and Arg-522.

Belongs to the transketolase family. Homodimer. Mg(2+) is required as a cofactor. The cofactor is Ca(2+). Requires Mn(2+) as cofactor. It depends on Co(2+) as a cofactor. Thiamine diphosphate serves as cofactor.

The enzyme catalyses D-sedoheptulose 7-phosphate + D-glyceraldehyde 3-phosphate = aldehydo-D-ribose 5-phosphate + D-xylulose 5-phosphate. Its function is as follows. Catalyzes the transfer of a two-carbon ketol group from a ketose donor to an aldose acceptor, via a covalent intermediate with the cofactor thiamine pyrophosphate. In Dictyostelium discoideum (Social amoeba), this protein is Transketolase (tkt-1).